Here is a 529-residue protein sequence, read N- to C-terminus: Methionine--tRNA ligase (529 aa).

Positions Tyr12–Ser22 match the 'HIGH' region motif. Zn(2+) contacts are provided by Cys127, Cys130, Cys145, and His148. The short motif at Lys301 to Ser305 is the 'KMSKS' region element. Residue Lys304 coordinates ATP.

This sequence belongs to the class-I aminoacyl-tRNA synthetase family. MetG type 2A subfamily. In terms of assembly, monomer. Requires Zn(2+) as cofactor.

The protein localises to the cytoplasm. The enzyme catalyses tRNA(Met) + L-methionine + ATP = L-methionyl-tRNA(Met) + AMP + diphosphate. Its function is as follows. Is required not only for elongation of protein synthesis but also for the initiation of all mRNA translation through initiator tRNA(fMet) aminoacylation. The protein is Methionine--tRNA ligase of Thermosynechococcus vestitus (strain NIES-2133 / IAM M-273 / BP-1).